We begin with the raw amino-acid sequence, 139 residues long: MVRTRKWMLSTTIIAMSSSNSEQKVDVAKLSPEEQKLFRLYGRLPQRKDLLVQKLQQGRKYFDSGDYALNKAGKASDSGITCIGKEIPSPDTIPHRVVSAGSPNKEPSLHTKRPSESSPSGASSRRESVTRHDLESNEN.

Residues Ile83–Asn139 are disordered. Residues Ser124–Asn139 are compositionally biased toward basic and acidic residues.

Belongs to the endosulfine family.

The protein localises to the nucleus. The protein resides in the cytoplasm. In terms of biological role, plays an essential role in initiation of the G0 program by preventing the degradation of specific nutrient-regulated mRNAs via the 5'-3' mRNA decay pathway. The sequence is that of mRNA stability protein mug134 (mug134) from Schizosaccharomyces pombe (strain 972 / ATCC 24843) (Fission yeast).